The chain runs to 225 residues: Urease subunit alpha (225 aa).

The urease gamma stretch occupies residues 1–102; that stretch reads MRLTPKELDK…LVTIHNPIED (102 aa). The urease beta stretch occupies residues 103-225; it reads NGKLTPGEYI…ANAAQKHFIH (123 aa).

This sequence in the N-terminal section; belongs to the urease gamma subunit family. The protein in the C-terminal section; belongs to the urease beta subunit family. As to quaternary structure, heterohexamer of 3 UreA (alpha) and 3 UreB (beta) subunits.

Its subcellular location is the cytoplasm. It catalyses the reaction urea + 2 H2O + H(+) = hydrogencarbonate + 2 NH4(+). The protein operates within nitrogen metabolism; urea degradation; CO(2) and NH(3) from urea (urease route): step 1/1. The polypeptide is Urease subunit alpha (Helicobacter hepaticus (strain ATCC 51449 / 3B1)).